A 395-amino-acid polypeptide reads, in one-letter code: Probable eukaryotic translation initiation factor 5 (395 aa).

28–35 (GKGNGIKT) contacts GTP. Disordered stretches follow at residues 146–171 (PPAKKKSHKHKRDSPVAEEEDGAEDE) and 374–395 (LAEASDESESEDEEEEEEDDDE). Positions 147–157 (PAKKKSHKHKR) are enriched in basic residues. Acidic residues-rich tracts occupy residues 161–170 (VAEEEDGAED) and 377–395 (ASDESESEDEEEEEEDDDE). The W2 domain maps to 228 to 384 (EEAESSRYDQ…AEASDESESE (157 aa)).

The protein belongs to the eIF-2-beta/eIF-5 family. Monomer.

In terms of biological role, catalyzes the hydrolysis of GTP bound to the 40S ribosomal initiation complex (40S.mRNA.Met-tRNA[F].eIF-2.GTP) with the subsequent joining of a 60S ribosomal subunit resulting in the release of eIF-2 and the guanine nucleotide. The subsequent joining of a 60S ribosomal subunit results in the formation of a functional 80S initiation complex (80S.mRNA.Met-tRNA[F]). The polypeptide is Probable eukaryotic translation initiation factor 5 (tif5) (Schizosaccharomyces pombe (strain 972 / ATCC 24843) (Fission yeast)).